The chain runs to 98 residues: Small ribosomal subunit protein bS6 (98 aa).

The protein belongs to the bacterial ribosomal protein bS6 family.

Binds together with bS18 to 16S ribosomal RNA. This chain is Small ribosomal subunit protein bS6, found in Staphylococcus aureus (strain NCTC 8325 / PS 47).